The sequence spans 144 residues: Fluoride-specific ion channel FluC (144 aa).

A run of 4 helical transmembrane segments spans residues leucine 7–alanine 27, phenylalanine 33–phenylalanine 53, leucine 71–threonine 91, and valine 105–alanine 125. 2 residues coordinate Na(+): glycine 79 and threonine 82.

Belongs to the fluoride channel Fluc/FEX (TC 1.A.43) family.

It is found in the cell inner membrane. It carries out the reaction fluoride(in) = fluoride(out). With respect to regulation, na(+) is not transported, but it plays an essential structural role and its presence is essential for fluoride channel function. Functionally, fluoride-specific ion channel. Important for reducing fluoride concentration in the cell, thus reducing its toxicity. In Gluconobacter oxydans (strain 621H) (Gluconobacter suboxydans), this protein is Fluoride-specific ion channel FluC.